A 495-amino-acid chain; its full sequence is ATP synthase subunit beta, chloroplastic (495 aa).

172-179 (GGAGVGKT) serves as a coordination point for ATP.

This sequence belongs to the ATPase alpha/beta chains family. F-type ATPases have 2 components, CF(1) - the catalytic core - and CF(0) - the membrane proton channel. CF(1) has five subunits: alpha(3), beta(3), gamma(1), delta(1), epsilon(1). CF(0) has four main subunits: a(1), b(1), b'(1) and c(9-12).

Its subcellular location is the plastid. It is found in the chloroplast thylakoid membrane. It catalyses the reaction ATP + H2O + 4 H(+)(in) = ADP + phosphate + 5 H(+)(out). Functionally, produces ATP from ADP in the presence of a proton gradient across the membrane. The catalytic sites are hosted primarily by the beta subunits. The sequence is that of ATP synthase subunit beta, chloroplastic from Scilla messeniaca (Greek squill).